The primary structure comprises 140 residues: Large ribosomal subunit protein uL14 (140 aa).

The protein belongs to the universal ribosomal protein uL14 family.

This chain is Large ribosomal subunit protein uL14 (RPL23), found in Brugia malayi (Filarial nematode worm).